The following is a 109-amino-acid chain: Aquaporin-2 (109 aa).

The Cytoplasmic portion of the chain corresponds to 1 to 6 (SVAFSR). Residues 7-27 (AVFAEFLATLLFVFFGLGSAL) traverse the membrane as a helical segment. The Extracellular segment spans residues 28 to 35 (NWPQALPS). Residues 36–54 (VLQIAMAFGLGIGTLVQAL) form a helical membrane-spanning segment. The Cytoplasmic portion of the chain corresponds to 55 to 59 (GHVSG). An intramembrane region (discontinuously helical) is located at residues 60–69 (AHINPAVTVA). Residues 63 to 65 (NPA) carry the NPA 1 motif. Residues 70-80 (CLVGCHVSFLR) are Cytoplasmic-facing. Residues 81–102 (AAFYVAAQLLGAVAGAALLHEI) form a helical membrane-spanning segment. Topologically, residues 103–109 (TPPHVRG) are extracellular.

Belongs to the MIP/aquaporin (TC 1.A.8) family. In terms of assembly, homotetramer. In terms of processing, serine phosphorylation is necessary and sufficient for expression at the apical membrane. Endocytosis is not phosphorylation-dependent. N-glycosylated.

It localises to the apical cell membrane. The protein localises to the basolateral cell membrane. It is found in the cell membrane. The protein resides in the cytoplasmic vesicle membrane. Its subcellular location is the golgi apparatus. It localises to the trans-Golgi network membrane. It catalyses the reaction H2O(in) = H2O(out). The enzyme catalyses glycerol(in) = glycerol(out). Its function is as follows. Forms a water-specific channel that provides the plasma membranes of renal collecting duct with high permeability to water, thereby permitting water to move in the direction of an osmotic gradient. Plays an essential role in renal water homeostasis. Could also be permeable to glycerol. In Canis lupus familiaris (Dog), this protein is Aquaporin-2.